A 319-amino-acid polypeptide reads, in one-letter code: Acetyl esterase (319 aa).

The short motif at 91 to 93 (HGG) is the Involved in the stabilization of the negatively charged intermediate by the formation of the oxyanion hole element. Residues Ser-165, Asp-262, and His-292 contribute to the active site.

It belongs to the 'GDXG' lipolytic enzyme family. As to quaternary structure, homodimer. Interacts with MalT and MelA.

The protein localises to the cytoplasm. Displays esterase activity towards short chain fatty esters (acyl chain length of up to 8 carbons). Able to hydrolyze triacetylglycerol (triacetin) and tributyrylglycerol (tributyrin), but not trioleylglycerol (triolein) or cholesterol oleate. Negatively regulates MalT activity by antagonizing maltotriose binding. Inhibits MelA galactosidase activity. This chain is Acetyl esterase, found in Escherichia coli (strain ATCC 8739 / DSM 1576 / NBRC 3972 / NCIMB 8545 / WDCM 00012 / Crooks).